Reading from the N-terminus, the 361-residue chain is Phospho-N-acetylmuramoyl-pentapeptide-transferase (361 aa).

Transmembrane regions (helical) follow at residues 25 to 45, 73 to 93, 98 to 118, 139 to 159, 168 to 188, 200 to 220, 237 to 257, 264 to 284, 289 to 309, and 339 to 359; these read RGIL…PAVI, TMGG…WGDL, VWLV…DDWI, IFGL…AAIT, IALP…IVGF, GLAI…AYAS, AGEL…FLWF, VFMG…IAVI, MVLV…MIQV, and VIVR…ATLK.

It belongs to the glycosyltransferase 4 family. MraY subfamily. Requires Mg(2+) as cofactor.

It is found in the cell inner membrane. The catalysed reaction is UDP-N-acetyl-alpha-D-muramoyl-L-alanyl-gamma-D-glutamyl-meso-2,6-diaminopimeloyl-D-alanyl-D-alanine + di-trans,octa-cis-undecaprenyl phosphate = di-trans,octa-cis-undecaprenyl diphospho-N-acetyl-alpha-D-muramoyl-L-alanyl-D-glutamyl-meso-2,6-diaminopimeloyl-D-alanyl-D-alanine + UMP. It participates in cell wall biogenesis; peptidoglycan biosynthesis. Its function is as follows. Catalyzes the initial step of the lipid cycle reactions in the biosynthesis of the cell wall peptidoglycan: transfers peptidoglycan precursor phospho-MurNAc-pentapeptide from UDP-MurNAc-pentapeptide onto the lipid carrier undecaprenyl phosphate, yielding undecaprenyl-pyrophosphoryl-MurNAc-pentapeptide, known as lipid I. In Xanthomonas axonopodis pv. citri (strain 306), this protein is Phospho-N-acetylmuramoyl-pentapeptide-transferase.